The sequence spans 506 residues: MEAEMLYSALALTFAIFMVYRILSNSQEKSSLIKLPPSPPGWLPVIGHVHLMKNLLHRTLYDFSQKLGPIFSLRFGTRLVVVVSSSSLVEECFTKYDIVLANRPQPSVDRRSLGFSTTSVIGAPYGDHWRNLRKLCDLEVFAPTRLASFLSIRLDERDRMISSLYKISSAGFAKVNLETKIVELTFNNIMRMVAGKRYYGEEAEDDEEAKRFRDLTKEALELTSASNPGEIFPILRWLGFNGLEKKLAVHARKTDEFMQGLLDEHRRGERQNTMVDHLLSLQESQPEYYTDEIITGLIVALIIAGTDASVVTTEWAMSLILNHPQVLEKARKELDTLVGHERMVDEHDLPKLRYLHCIVLETLRLFPSVPTLVPHEPSEDCKIGGYNVPKGTMILVNAWAIHRDPKVWDDPLSFKPDRFETMEVETHKLLPFGMGRRACPGAGLAQKFVGLALGSLIQCFEWERMSAEKIDLNEGSGITLPKAKTLEAMCKPRHIMERVLRQVSNV.

The chain crosses the membrane as a helical span at residues 3-23; it reads AEMLYSALALTFAIFMVYRIL. Residue C439 participates in heme binding.

This sequence belongs to the cytochrome P450 family. Heme is required as a cofactor. As to expression, expressed in seeds.

The protein resides in the membrane. It catalyses the reaction (+)-piperitol + reduced [NADPH--hemoprotein reductase] + O2 = (+)-sesamin + oxidized [NADPH--hemoprotein reductase] + 2 H2O + H(+). The enzyme catalyses (+)-pinoresinol + reduced [NADPH--hemoprotein reductase] + O2 = (+)-piperitol + oxidized [NADPH--hemoprotein reductase] + 2 H2O + H(+). Involved in the biosynthesis of (+)-sesamin, a furofuran class lignan. Functions in a dual catalytic mode. Catalyzes the synthesis of (+)-sesamin from (+)- pinoresinol by formation of two successive methylenedioxy bridges on (+)-pinoresinol and (+)-piperitol, respectively. In Sesamum radiatum (Black benniseed), this protein is (+)-piperitol/(+)-sesamin synthase CYP81Q2.